Here is a 151-residue protein sequence, read N- to C-terminus: Ribosome maturation factor RimP (151 aa).

This sequence belongs to the RimP family.

Its subcellular location is the cytoplasm. Required for maturation of 30S ribosomal subunits. This Vibrio cholerae serotype O1 (strain ATCC 39541 / Classical Ogawa 395 / O395) protein is Ribosome maturation factor RimP.